A 145-amino-acid polypeptide reads, in one-letter code: Superoxide dismutase [Mn/Fe] (145 aa).

Fe(3+) is bound by residues His10 and His64. His10 and His64 together coordinate Mn(2+).

The protein belongs to the iron/manganese superoxide dismutase family. The cofactor is Mn(2+). Fe(3+) is required as a cofactor.

The enzyme catalyses 2 superoxide + 2 H(+) = H2O2 + O2. Its function is as follows. Destroys superoxide anion radicals which are normally produced within the cells and which are toxic to biological systems. Catalyzes the dismutation of superoxide anion radicals into O2 and H2O2 by successive reduction and oxidation of the transition metal ion at the active site. This chain is Superoxide dismutase [Mn/Fe] (sodA), found in Streptococcus salivarius.